The following is a 249-amino-acid chain: Triosephosphate isomerase (249 aa).

9-11 (NWK) provides a ligand contact to substrate. The active-site Electrophile is histidine 95. Glutamate 167 serves as the catalytic Proton acceptor. Substrate is bound by residues glycine 173, serine 213, and 234-235 (GG).

The protein belongs to the triosephosphate isomerase family. In terms of assembly, homodimer.

It localises to the cytoplasm. The catalysed reaction is D-glyceraldehyde 3-phosphate = dihydroxyacetone phosphate. It participates in carbohydrate biosynthesis; gluconeogenesis. It functions in the pathway carbohydrate degradation; glycolysis; D-glyceraldehyde 3-phosphate from glycerone phosphate: step 1/1. Involved in the gluconeogenesis. Catalyzes stereospecifically the conversion of dihydroxyacetone phosphate (DHAP) to D-glyceraldehyde-3-phosphate (G3P). This Dictyoglomus turgidum (strain DSM 6724 / Z-1310) protein is Triosephosphate isomerase.